We begin with the raw amino-acid sequence, 566 residues long: Urease subunit beta (566 aa).

The Urease domain maps to 129 to 566 (GGIDTHIHFI…VPMARRYFMF (438 aa)). Ni(2+)-binding residues include His-134, His-136, and Lys-217. Lys-217 carries the N6-carboxylysine modification. His-219 is a binding site for substrate. Ni(2+)-binding residues include His-246 and His-272. The active-site Proton donor is His-320. Asp-360 contributes to the Ni(2+) binding site.

Belongs to the metallo-dependent hydrolases superfamily. Urease alpha subunit family. As to quaternary structure, heterohexamer of 3 UreA (alpha) and 3 UreB (beta) subunits. Requires Ni cation as cofactor. Post-translationally, carboxylation allows a single lysine to coordinate two nickel ions.

It localises to the cytoplasm. The catalysed reaction is urea + 2 H2O + H(+) = hydrogencarbonate + 2 NH4(+). Its pathway is nitrogen metabolism; urea degradation; CO(2) and NH(3) from urea (urease route): step 1/1. This chain is Urease subunit beta, found in Aliarcobacter butzleri (strain RM4018) (Arcobacter butzleri).